Consider the following 506-residue polypeptide: Maturase K (506 aa).

Belongs to the intron maturase 2 family. MatK subfamily.

Its subcellular location is the plastid. The protein resides in the chloroplast. Usually encoded in the trnK tRNA gene intron. Probably assists in splicing its own and other chloroplast group II introns. The protein is Maturase K of Cytisus scoparius (Scotch broom).